The primary structure comprises 354 residues: Trans-L-3-hydroxyproline dehydratase (354 aa).

Cys104 serves as the catalytic Proton acceptor. Residues 105–106 (GH), Asp269, and 274–275 (GS) each bind substrate.

Belongs to the proline racemase family. Homodimer.

The enzyme catalyses trans-3-hydroxy-L-proline = 1-pyrroline-2-carboxylate + H2O. In terms of biological role, catalyzes the dehydration of trans-3-hydroxy-L-proline to Delta(1)-pyrroline-2-carboxylate (Pyr2C). This Bos taurus (Bovine) protein is Trans-L-3-hydroxyproline dehydratase (L3HYPDH).